The sequence spans 512 residues: Alpha-amylase 1 (512 aa).

The N-terminal stretch at 1–25 (MRFSTEGFTSKVVAAILAFSRLVSA) is a signal peptide. A disulfide bond links Cys66 and Cys74. A substrate-binding site is contributed by Trp119. Residue Asn157 coordinates Ca(2+). Substrate is bound at residue His158. Cys186 and Cys200 are disulfide-bonded. Ca(2+)-binding residues include Glu198 and Asp211. Asn233 carries N-linked (GlcNAc...) asparagine glycosylation. Position 240 (Arg240) interacts with substrate. Residues Asp242, His246, and Glu266 each contribute to the Ca(2+) site. The Nucleophile role is filled by Asp242. Residue 245-246 (KH) participates in substrate binding. Residue Glu266 is the Proton donor of the active site. Residue Gly270 coordinates substrate. Cys276 and Cys319 are disulfide-bonded. 2 residues coordinate substrate: Asp333 and Arg380. Cys475 and Cys510 are joined by a disulfide.

This sequence belongs to the glycosyl hydrolase 13 family. It depends on Ca(2+) as a cofactor.

The protein resides in the secreted. It carries out the reaction Endohydrolysis of (1-&gt;4)-alpha-D-glucosidic linkages in polysaccharides containing three or more (1-&gt;4)-alpha-linked D-glucose units.. With respect to regulation, alpha-amylase expression underlies catabolite repression by glucose. This chain is Alpha-amylase 1 (AMY1), found in Schwanniomyces occidentalis (Yeast).